The primary structure comprises 437 residues: ATP-dependent protease ATPase subunit HslU (437 aa).

Residues V18, 60–65, D250, E315, and R387 each bind ATP; that span reads GVGKTE.

This sequence belongs to the ClpX chaperone family. HslU subfamily. A double ring-shaped homohexamer of HslV is capped on each side by a ring-shaped HslU homohexamer. The assembly of the HslU/HslV complex is dependent on binding of ATP.

It localises to the cytoplasm. ATPase subunit of a proteasome-like degradation complex; this subunit has chaperone activity. The binding of ATP and its subsequent hydrolysis by HslU are essential for unfolding of protein substrates subsequently hydrolyzed by HslV. HslU recognizes the N-terminal part of its protein substrates and unfolds these before they are guided to HslV for hydrolysis. The chain is ATP-dependent protease ATPase subunit HslU from Desulfovibrio desulfuricans (strain ATCC 27774 / DSM 6949 / MB).